The following is a 245-amino-acid chain: Geranylgeranylglyceryl phosphate synthase (245 aa).

Residues aspartate 20 and serine 50 each coordinate Mg(2+). Residues 169-175 (YLEAGSG), 202-203 (GG), and 224-225 (GT) each bind sn-glycerol 1-phosphate.

It belongs to the GGGP/HepGP synthase family. Group II subfamily. The cofactor is Mg(2+).

The protein resides in the cytoplasm. It catalyses the reaction sn-glycerol 1-phosphate + (2E,6E,10E)-geranylgeranyl diphosphate = sn-3-O-(geranylgeranyl)glycerol 1-phosphate + diphosphate. It participates in membrane lipid metabolism; glycerophospholipid metabolism. Prenyltransferase that catalyzes the transfer of the geranylgeranyl moiety of geranylgeranyl diphosphate (GGPP) to the C3 hydroxyl of sn-glycerol-1-phosphate (G1P). This reaction is the first ether-bond-formation step in the biosynthesis of archaeal membrane lipids. This chain is Geranylgeranylglyceryl phosphate synthase, found in Ignicoccus hospitalis (strain KIN4/I / DSM 18386 / JCM 14125).